The primary structure comprises 308 residues: Probable manganese-dependent inorganic pyrophosphatase (308 aa).

Residues histidine 9, aspartate 13, aspartate 15, aspartate 75, histidine 97, and aspartate 149 each contribute to the Mn(2+) site.

It belongs to the PPase class C family. It depends on Mn(2+) as a cofactor.

It localises to the cytoplasm. It catalyses the reaction diphosphate + H2O = 2 phosphate + H(+). In Staphylococcus carnosus (strain TM300), this protein is Probable manganese-dependent inorganic pyrophosphatase.